Reading from the N-terminus, the 342-residue chain is Ribosomal RNA small subunit methyltransferase C (342 aa).

This sequence belongs to the methyltransferase superfamily. RsmC family. In terms of assembly, monomer.

Its subcellular location is the cytoplasm. The enzyme catalyses guanosine(1207) in 16S rRNA + S-adenosyl-L-methionine = N(2)-methylguanosine(1207) in 16S rRNA + S-adenosyl-L-homocysteine + H(+). Functionally, specifically methylates the guanine in position 1207 of 16S rRNA in the 30S particle. In Erwinia tasmaniensis (strain DSM 17950 / CFBP 7177 / CIP 109463 / NCPPB 4357 / Et1/99), this protein is Ribosomal RNA small subunit methyltransferase C.